The chain runs to 436 residues: O-phosphoseryl-tRNA(Sec) selenium transferase (436 aa).

The tract at residues 1 to 44 (MLDFNIEGLIPKNMEKRGELVLNEYLKEIEDVFNHRKIPENGID) is tetramerization. Arg-72 provides a ligand contact to pyridoxal 5'-phosphate. The segment at 93-103 (GRSGNLVDPQP) is phosphate loop (P-loop). 3 residues coordinate substrate: Arg-94, Ser-95, and Gln-102. An N6-(pyridoxal phosphate)lysine modification is found at Lys-278. Arg-307 contacts substrate.

Belongs to the SepSecS family. Homotetramer. It depends on pyridoxal 5'-phosphate as a cofactor.

The enzyme catalyses O-phospho-L-seryl-tRNA(Sec) + selenophosphate + H2O = L-selenocysteinyl-tRNA(Sec) + 2 phosphate. Its pathway is aminoacyl-tRNA biosynthesis; selenocysteinyl-tRNA(Sec) biosynthesis; selenocysteinyl-tRNA(Sec) from L-seryl-tRNA(Sec) (archaeal/eukaryal route): step 2/2. In terms of biological role, converts O-phosphoseryl-tRNA(Sec) to selenocysteinyl-tRNA(Sec) required for selenoprotein biosynthesis. The polypeptide is O-phosphoseryl-tRNA(Sec) selenium transferase (spcS) (Methanococcus maripaludis (strain DSM 14266 / JCM 13030 / NBRC 101832 / S2 / LL)).